A 139-amino-acid chain; its full sequence is Endocuticle structural glycoprotein SgAbd-8 (139 aa).

The residue at position 1 (Gln-1) is a Pyrrolidone carboxylic acid. A glycan (O-linked (HexNAc...) threonine) is linked at Thr-14. O-linked (HexNAc...) serine glycosylation is present at Ser-15. The region spanning 29–99 (DGSYAWSYET…PEGAHLPTPP (71 aa)) is the Chitin-binding type R&amp;R domain. The O-linked (HexNAc...) threonine glycan is linked to Thr-97. Positions 111–139 (FIASQPQQPGNNGGGQFPRPQPFPRPGAF) are disordered. Over residues 129 to 139 (RPQPFPRPGAF) the composition is skewed to pro residues.

Functionally, component of the abdominal endocuticle. This is Endocuticle structural glycoprotein SgAbd-8 from Schistocerca gregaria (Desert locust).